Consider the following 294-residue polypeptide: Acetaldehyde dehydrogenase (294 aa).

11-14 (SGNI) contributes to the NAD(+) binding site. C126 (acyl-thioester intermediate) is an active-site residue. NAD(+) is bound by residues 157 to 165 (SAGPGTRAN) and N269.

It belongs to the acetaldehyde dehydrogenase family.

The catalysed reaction is acetaldehyde + NAD(+) + CoA = acetyl-CoA + NADH + H(+). This is Acetaldehyde dehydrogenase (pheF) from Geobacillus stearothermophilus (Bacillus stearothermophilus).